The chain runs to 246 residues: Octanoyltransferase (246 aa).

One can recognise a BPL/LPL catalytic domain in the interval 38–213; the sequence is AQQSDEFWVL…FLAKRLGLTP (176 aa). Substrate-binding positions include 77 to 84, 144 to 146, and 157 to 159; these read RGGQVTYH, SLG, and GLA. Catalysis depends on Cys-175, which acts as the Acyl-thioester intermediate. Residues 225-246 are disordered; that stretch reads RQENVTTGGDPGSALTQQPERL.

It belongs to the LipB family.

The protein resides in the cytoplasm. It carries out the reaction octanoyl-[ACP] + L-lysyl-[protein] = N(6)-octanoyl-L-lysyl-[protein] + holo-[ACP] + H(+). It participates in protein modification; protein lipoylation via endogenous pathway; protein N(6)-(lipoyl)lysine from octanoyl-[acyl-carrier-protein]: step 1/2. Its function is as follows. Catalyzes the transfer of endogenously produced octanoic acid from octanoyl-acyl-carrier-protein onto the lipoyl domains of lipoate-dependent enzymes. Lipoyl-ACP can also act as a substrate although octanoyl-ACP is likely to be the physiological substrate. This is Octanoyltransferase from Alcanivorax borkumensis (strain ATCC 700651 / DSM 11573 / NCIMB 13689 / SK2).